The chain runs to 365 residues: Peptide chain release factor 2 (365 aa).

Gln-251 is subject to N5-methylglutamine.

The protein belongs to the prokaryotic/mitochondrial release factor family. Post-translationally, methylated by PrmC. Methylation increases the termination efficiency of RF2.

Its subcellular location is the cytoplasm. Peptide chain release factor 2 directs the termination of translation in response to the peptide chain termination codons UGA and UAA. The protein is Peptide chain release factor 2 of Campylobacter jejuni subsp. jejuni serotype O:23/36 (strain 81-176).